The following is a 278-amino-acid chain: Inositol oxygenase (278 aa).

Substrate is bound by residues Arg-22 and Asp-78–Ser-80. Positions 91, 116, and 117 each coordinate Fe cation. Substrate-binding positions include Lys-120 and Gly-134–Asp-135. 3 residues coordinate Fe cation: His-187, His-213, and Asp-246. Residue His-213–Ser-214 participates in substrate binding.

This sequence belongs to the myo-inositol oxygenase family. Fe cation is required as a cofactor.

It is found in the cytoplasm. The catalysed reaction is myo-inositol + O2 = D-glucuronate + H2O + H(+). Its pathway is polyol metabolism; myo-inositol degradation into D-glucuronate; D-glucuronate from myo-inositol: step 1/1. In Danio rerio (Zebrafish), this protein is Inositol oxygenase (miox).